The chain runs to 296 residues: Uridine phosphorylase A (296 aa).

Residues glycine 46, arginine 77, and 121–124 contribute to the phosphate site; that span reads RLGT. Residues 125-126 and 201-203 each bind uridine; these read SG and QGR.

It belongs to the PNP/UDP phosphorylase family. In terms of assembly, homodimer.

It catalyses the reaction uridine + phosphate = alpha-D-ribose 1-phosphate + uracil. It functions in the pathway pyrimidine metabolism; UMP biosynthesis via salvage pathway; uracil from uridine (phosphorylase route): step 1/1. In terms of biological role, catalyzes the reversible phosphorylytic cleavage of uridine and deoxyuridine to uracil and ribose- or deoxyribose-1-phosphate. The produced molecules are then utilized as carbon and energy sources or in the rescue of pyrimidine bases for nucleotide synthesis. This is Uridine phosphorylase A from Schistosoma mansoni (Blood fluke).